The sequence spans 513 residues: MATSSSAWLMFSDHYPEILIAIACFLIFSLLLSARSSSEDSLPYNWPIFGMLPAIISNNQFNDFTTARLRKMGWTFIFKGPWLLDMDYIFTCDPSNINHMFNDNFENYPKGELGKVFDIFGNNIFNADGDLWHDHRKMAQTILWDGNYRTMQATFIRNKMDNALIPILDSAASKRKPVDLQDVFFRFTFDTSCFSVLAADPESLTMEFPAVPFSKAADQALDAALTRHITPRLIWKLKRFFNVGSERTLAVAWKVIDSYIYDKIAELKAKRKLVGKINSYDAVSFYMDNFNIHDDKFLRDNAFTYLLAQRNTQSLTMTWLFYALFENPKVELKILSELKSIVDESSERKFNDGFALFDSNMIQSAIYLHATLCEALRIYPPVPFEIKDAHKADVLPSGHKVRAGEKILFSPYAMARMKGIWGDDCLEFKPERWITGNGTLKHEPAYKFFAFSAGPRICLGKELSFTQMKMVVATIIYNFHLQMVKGHVVEQSNSILMDMKHGLMVQVRKRSVM.

The helical transmembrane segment at 14–34 threads the bilayer; that stretch reads HYPEILIAIACFLIFSLLLSA. A heme-binding site is contributed by cysteine 458.

Belongs to the cytochrome P450 family. Heme serves as cofactor.

Its subcellular location is the membrane. It catalyses the reaction 4'-O-methylnorbelladine + reduced [NADPH--hemoprotein reductase] + O2 = (10bS,4aR)-noroxomaritidine + oxidized [NADPH--hemoprotein reductase] + 2 H2O + H(+). It carries out the reaction 4'-O-methylnorbelladine + reduced [NADPH--hemoprotein reductase] + O2 = (10bR,4aS)-noroxomaritidine + oxidized [NADPH--hemoprotein reductase] + 2 H2O + H(+). Its pathway is alkaloid biosynthesis. Its function is as follows. Cytochrome P450 that catalyzes an intramolecular para-para' C-C phenol coupling of 4'-O-methylnorbelladine in alkaloids biosynthesis, including haemanthamine- and crinamine-type alkaloids, promising anticancer agents. Catalyzes the formation of (10bR,4aS)-noroxomaritidine and (10bS,4aR)-noroxomaritidine from 4'-O-methylnorbelladine. Also produces N-demethylnarwedine as a minor product. Involved in the biosynthesis of haemanthamine. Can also use 4'-O-methyl-N-methylnorbelladine, (S)- and (R)-coclaurine as substrates, but not 3'-O-methylnorbelladine, 3',4'-O-dimethylnorbelladine, norbelladine, haemanthamine, (10bS,4aR)- or (10bR,4aS)-noroxomaritidine, isovanillin or tyramine. The sequence is that of Noroxomaritidine synthase from Narcissus aff. pseudonarcissus MK-2014 (Daffodil).